A 631-amino-acid chain; its full sequence is MSTTTLTRREQRAKAQHFIDTLEGTAFPNSKRIYVTGSQHDIRVPMREIQLSPTLIGGSKDNQQFEENEAVPVYDTSGPYGDPEVAINVQQGLAKLRQPWIDARNDSEELDDRSSAYTRERLADDGLDDLRFTGLLTPKRAKAGKRITQLHYARQGIVTPEMEFIAIRENMGRERICSEVLRHQHPGMSFGARLPENITPEFVRDEVAAGRAIIPANINHPESEPMIIGRNFLVKVNANIGNSAVTSSIEEEVEKLVWSTRWGADTVMDLSTGRYIHETREWILRNSPVPIGTVPIYQALEKVNGIAEDLTWEAFRDTLLEQAEQGVDYFTIHAGVLLRYVPMTAKRLTGIVSRGGSIMAKWCLSHHKENFLFEHFREICEICAAYDVSLSLGDGLRPGSIQDANDEAQFSELHTLGELTKIAWEYDVQVMIEGPGHVPMHMIQRNMTEELESCHEAPFYTLGPLTTDIAPGYDHFTSGIGAAMIGWFGCAMLCYVTPKEHLGLPNKEDVKQGLITYKIAAHAADLAKGHPGAQIRDNAMSKARFEFRWEDQFNLALDPFTARAYHDETLPQESGKVAHFCSMCGPKFCSMKISQEVRDYAAAQAIEVGMADMSENFRAKGGEIYLKREEA.

Substrate-binding positions include Asn239, Met268, Tyr297, His333, 353–355, 394–397, and Glu433; these read SRG and DGLR. His437 serves as a coordination point for Zn(2+). Tyr460 contributes to the substrate binding site. His501 serves as a coordination point for Zn(2+). 3 residues coordinate [4Fe-4S] cluster: Cys581, Cys584, and Cys589.

It belongs to the ThiC family. As to quaternary structure, homodimer. It depends on [4Fe-4S] cluster as a cofactor.

It catalyses the reaction 5-amino-1-(5-phospho-beta-D-ribosyl)imidazole + S-adenosyl-L-methionine = 4-amino-2-methyl-5-(phosphooxymethyl)pyrimidine + CO + 5'-deoxyadenosine + formate + L-methionine + 3 H(+). The protein operates within cofactor biosynthesis; thiamine diphosphate biosynthesis. Catalyzes the synthesis of the hydroxymethylpyrimidine phosphate (HMP-P) moiety of thiamine from aminoimidazole ribotide (AIR) in a radical S-adenosyl-L-methionine (SAM)-dependent reaction. In Salmonella enteritidis PT4 (strain P125109), this protein is Phosphomethylpyrimidine synthase.